The following is a 1408-amino-acid chain: ABC transporter B family member 20 (1408 aa).

The segment at 14 to 49 (HMQPLTPVSEVSEPPESPSPYLDPGAESGGGTGTAA) is disordered. Residues 20-39 (PVSEVSEPPESPSPYLDPGA) show a composition bias toward low complexity. Residues 86–106 (VLMIVGSVAAAAHGTALIVYL) traverse the membrane as a helical segment. The 294-residue stretch at 88–381 (MIVGSVAAAA…AATNFYSFDQ (294 aa)) folds into the ABC transmembrane type-1 1 domain. Residue N120 is glycosylated (N-linked (GlcNAc...) asparagine). The next 3 helical transmembrane spans lie at 141–161 (IVYI…CWIL), 214–233 (VGNY…IGFV), and 238–260 (IALI…NIFL). N-linked (GlcNAc...) asparagine glycosylation occurs at N293. 2 consecutive transmembrane segments (helical) span residues 312 to 332 (GILI…LAIC) and 353 to 373 (GEII…NQAA). An ABC transporter 1 domain is found at 414 to 649 (IEFRNVYFSY…GGLYAELLKC (236 aa)). Position 449–456 (449–456 (GRNGSGKS)) interacts with ATP. A glycan (N-linked (GlcNAc...) asparagine) is linked at N451. 2 disordered regions span residues 676-735 (SSAG…SLDC) and 752-816 (LPHL…DAQH). Residues 762-771 (CPQQKSNGSE) show a composition bias toward polar residues. N768 carries N-linked (GlcNAc...) asparagine glycosylation. A compositionally biased stretch (basic and acidic residues) spans 802-816 (DDTKANGKASKDAQH). The region spanning 836-1124 (AVLGSLGAAI…PFGLAPYILK (289 aa)) is the ABC transmembrane type-1 2 domain. A run of 6 helical transmembrane segments spans residues 841 to 861 (LGAA…ALVV), 881 to 901 (LIIA…HFYF), 959 to 979 (IFIQ…LLGW), 983 to 1003 (LVAL…KLWL), 1062 to 1082 (IGFA…LLLW), and 1103 to 1123 (MVFS…PYIL). The ABC transporter 2 domain maps to 1159–1396 (IELKNVDFCY…NGLYVRLMQP (238 aa)). N1179 is a glycosylation site (N-linked (GlcNAc...) asparagine). ATP is bound at residue 1194–1201 (GVSGSGKS). N-linked (GlcNAc...) asparagine glycans are attached at residues N1261 and N1347.

Belongs to the ABC transporter superfamily. ABCB family. Multidrug resistance exporter (TC 3.A.1.201) subfamily. Expressed in aerial tissues.

The protein resides in the membrane. The catalysed reaction is (indol-3-yl)acetate(in) + ATP + H2O = (indol-3-yl)acetate(out) + ADP + phosphate + H(+). In terms of biological role, probable auxin efflux transporter that contributes, together with ABCB6 and in a FKBP42/TWD1-dependent manner, to the regulation of leaf position and morphology, internode distribution, roots development, and inflorescence organization, probably by modulating auxin repartition. The polypeptide is ABC transporter B family member 20 (Arabidopsis thaliana (Mouse-ear cress)).